Reading from the N-terminus, the 429-residue chain is MYVEIVDVRAREVLDSRGNPTVEAEVVLEDGTMGRAIVPSGASTGKFEALEIRDKDKKRYLGKGVLKAVENVNETIAPALIGMNAFDQPLVDKTLIELDGTENKSKLGANAILAVSMAVARAAANYLGLPLYKYLGGVNAKVLPVPLMNVINGGQHADNNLDLQEFMIVPAGFDSFREALRAGAEIFHTLKKILHEAGHVTAVGDEGGFAPNLSSNEEAIKVLIEAIEKAGYKPGEEVFIALDCAASSFYDEEKGVYYVDGEEKSSEVLMGYYEELVAKYPIISIEDPFAEEDWDAFVEFTKRVGNKVQIVGDDLYVTNVKRLSKGIELKATNSILIKLNQIGTVTETLDAVEMAQKNNMTAIISHRSGESEDTFIADLAVATNAGFIKTGSLSRSERTAKYNQLLRIEEELGKVAEFRGLKSFYSIKR.

Q164 is a binding site for (2R)-2-phosphoglycerate. Catalysis depends on E206, which acts as the Proton donor. D243, E286, and D313 together coordinate Mg(2+). Positions 338, 367, 368, and 389 each coordinate (2R)-2-phosphoglycerate. Catalysis depends on K338, which acts as the Proton acceptor.

It belongs to the enolase family. Mg(2+) serves as cofactor.

It localises to the cytoplasm. It is found in the secreted. The protein localises to the cell surface. The catalysed reaction is (2R)-2-phosphoglycerate = phosphoenolpyruvate + H2O. Its pathway is carbohydrate degradation; glycolysis; pyruvate from D-glyceraldehyde 3-phosphate: step 4/5. In terms of biological role, catalyzes the reversible conversion of 2-phosphoglycerate (2-PG) into phosphoenolpyruvate (PEP). It is essential for the degradation of carbohydrates via glycolysis. The sequence is that of Enolase from Thermotoga sp. (strain RQ2).